Reading from the N-terminus, the 317-residue chain is Ribosomal RNA small subunit methyltransferase H (317 aa).

Residues 37 to 39, Asp56, Phe85, Asp106, and Gln113 each bind S-adenosyl-L-methionine; that span reads AGH.

Belongs to the methyltransferase superfamily. RsmH family.

It is found in the cytoplasm. It catalyses the reaction cytidine(1402) in 16S rRNA + S-adenosyl-L-methionine = N(4)-methylcytidine(1402) in 16S rRNA + S-adenosyl-L-homocysteine + H(+). In terms of biological role, specifically methylates the N4 position of cytidine in position 1402 (C1402) of 16S rRNA. This is Ribosomal RNA small subunit methyltransferase H from Lactococcus lactis subsp. lactis (strain IL1403) (Streptococcus lactis).